The primary structure comprises 271 residues: Phosphatidylglycerol--prolipoprotein diacylglyceryl transferase (271 aa).

Helical transmembrane passes span 25–45 (WYGIMYDVALLLALLLAKFFV), 60–80 (YFIWVEIGVILGARLGYILIY), 103–123 (FVGIRGMSYHGAIIGFLIATL), 134–154 (WIFLDLVALSVPLAYVFGRIG), 181–201 (PSQFYEAFLEGIVVFIIVYLA), 209–229 (GELILVYAGAYSLARFICEFY), and 235–255 (GIGFVLWGMSMGQILSFIMFI). Arginine 152 contacts a 1,2-diacyl-sn-glycero-3-phospho-(1'-sn-glycerol).

The protein belongs to the Lgt family.

The protein localises to the cell inner membrane. It carries out the reaction L-cysteinyl-[prolipoprotein] + a 1,2-diacyl-sn-glycero-3-phospho-(1'-sn-glycerol) = an S-1,2-diacyl-sn-glyceryl-L-cysteinyl-[prolipoprotein] + sn-glycerol 1-phosphate + H(+). It functions in the pathway protein modification; lipoprotein biosynthesis (diacylglyceryl transfer). In terms of biological role, catalyzes the transfer of the diacylglyceryl group from phosphatidylglycerol to the sulfhydryl group of the N-terminal cysteine of a prolipoprotein, the first step in the formation of mature lipoproteins. This chain is Phosphatidylglycerol--prolipoprotein diacylglyceryl transferase, found in Campylobacter jejuni subsp. doylei (strain ATCC BAA-1458 / RM4099 / 269.97).